A 316-amino-acid chain; its full sequence is tRNA dimethylallyltransferase (316 aa).

17–24 (GPTASGKT) contacts ATP. Residue 19-24 (TASGKT) coordinates substrate. Interaction with substrate tRNA regions lie at residues 42-45 (DSAL), 166-170 (QRLSR), and 247-252 (RCVGYR).

Belongs to the IPP transferase family. In terms of assembly, monomer. Mg(2+) serves as cofactor.

The catalysed reaction is adenosine(37) in tRNA + dimethylallyl diphosphate = N(6)-dimethylallyladenosine(37) in tRNA + diphosphate. Its function is as follows. Catalyzes the transfer of a dimethylallyl group onto the adenine at position 37 in tRNAs that read codons beginning with uridine, leading to the formation of N6-(dimethylallyl)adenosine (i(6)A). The sequence is that of tRNA dimethylallyltransferase from Salmonella newport (strain SL254).